We begin with the raw amino-acid sequence, 382 residues long: Putative glutamate--cysteine ligase 2-1 (382 aa).

The protein belongs to the glutamate--cysteine ligase type 2 family. YbdK subfamily.

It catalyses the reaction L-cysteine + L-glutamate + ATP = gamma-L-glutamyl-L-cysteine + ADP + phosphate + H(+). Its function is as follows. ATP-dependent carboxylate-amine ligase which exhibits weak glutamate--cysteine ligase activity. The chain is Putative glutamate--cysteine ligase 2-1 from Frankia casuarinae (strain DSM 45818 / CECT 9043 / HFP020203 / CcI3).